Reading from the N-terminus, the 213-residue chain is Imidazole glycerol phosphate synthase subunit HisH (213 aa).

Residues 4–213 (SIAIVDYGMG…LYRNFVHWKP (210 aa)) enclose the Glutamine amidotransferase type-1 domain. Cys83 serves as the catalytic Nucleophile. Residues His193 and Glu195 contribute to the active site.

As to quaternary structure, heterodimer of HisH and HisF.

The protein localises to the cytoplasm. It carries out the reaction 5-[(5-phospho-1-deoxy-D-ribulos-1-ylimino)methylamino]-1-(5-phospho-beta-D-ribosyl)imidazole-4-carboxamide + L-glutamine = D-erythro-1-(imidazol-4-yl)glycerol 3-phosphate + 5-amino-1-(5-phospho-beta-D-ribosyl)imidazole-4-carboxamide + L-glutamate + H(+). It catalyses the reaction L-glutamine + H2O = L-glutamate + NH4(+). It participates in amino-acid biosynthesis; L-histidine biosynthesis; L-histidine from 5-phospho-alpha-D-ribose 1-diphosphate: step 5/9. Functionally, IGPS catalyzes the conversion of PRFAR and glutamine to IGP, AICAR and glutamate. The HisH subunit catalyzes the hydrolysis of glutamine to glutamate and ammonia as part of the synthesis of IGP and AICAR. The resulting ammonia molecule is channeled to the active site of HisF. The polypeptide is Imidazole glycerol phosphate synthase subunit HisH (Burkholderia lata (strain ATCC 17760 / DSM 23089 / LMG 22485 / NCIMB 9086 / R18194 / 383)).